The following is a 228-amino-acid chain: Ribosomal RNA small subunit methyltransferase G (228 aa).

Residues glycine 89, leucine 94, 140 to 141 (VE), and arginine 159 contribute to the S-adenosyl-L-methionine site.

This sequence belongs to the methyltransferase superfamily. RNA methyltransferase RsmG family.

The protein localises to the cytoplasm. The enzyme catalyses guanosine(527) in 16S rRNA + S-adenosyl-L-methionine = N(7)-methylguanosine(527) in 16S rRNA + S-adenosyl-L-homocysteine. Its function is as follows. Specifically methylates the N7 position of guanine in position 527 of 16S rRNA. This chain is Ribosomal RNA small subunit methyltransferase G, found in Burkholderia lata (strain ATCC 17760 / DSM 23089 / LMG 22485 / NCIMB 9086 / R18194 / 383).